A 204-amino-acid chain; its full sequence is Protease (204 aa).

Residues histidine 54, aspartate 71, and cysteine 121 contribute to the active site.

Belongs to the peptidase C5 family. Interacts with protease cofactor pVI-C; this interaction is necessary for protease activation.

The protein localises to the virion. It is found in the host nucleus. It carries out the reaction Cleaves proteins of the adenovirus and its host cell at two consensus sites: -Yaa-Xaa-Gly-Gly-|-Xaa- and -Yaa-Xaa-Gly-Xaa-|-Gly- (in which Yaa is Met, Ile or Leu, and Xaa is any amino acid).. With respect to regulation, requires DNA and protease cofactor for maximal activation. Inside nascent virions, becomes partially activated by binding to the viral DNA, allowing it to cleave the cofactor that binds to the protease and fully activates it. Actin, like the viral protease cofactor, seems to act as a cofactor in the cleavage of cytokeratin 18 and of actin itself. Cleaves viral precursor proteins (pTP, pIIIa, pVI, pVII, pVIII, and pX) inside newly assembled particles giving rise to mature virions. Protease complexed to its cofactor slides along the viral DNA to specifically locate and cleave the viral precursors. Mature virions have a weakened organization compared to the unmature virions, thereby facilitating subsequent uncoating. Without maturation, the particle lacks infectivity and is unable to uncoat. Late in adenovirus infection, in the cytoplasm, may participate in the cytoskeleton destruction. Cleaves host cell cytoskeletal keratins K7 and K18. The polypeptide is Protease (Frog adenovirus 1 (strain ATCC VR-896) (FrAdV-1)).